The following is a 98-amino-acid chain: NADH-ubiquinone oxidoreductase chain 4L (98 aa).

The next 3 membrane-spanning stretches (helical) occupy residues 2 to 22 (TLVM…TLMF), 26 to 46 (LMST…MAVI), and 61 to 81 (IIIL…LAMV).

It belongs to the complex I subunit 4L family. In terms of assembly, core subunit of respiratory chain NADH dehydrogenase (Complex I) which is composed of 45 different subunits.

It is found in the mitochondrion inner membrane. The enzyme catalyses a ubiquinone + NADH + 5 H(+)(in) = a ubiquinol + NAD(+) + 4 H(+)(out). In terms of biological role, core subunit of the mitochondrial membrane respiratory chain NADH dehydrogenase (Complex I) which catalyzes electron transfer from NADH through the respiratory chain, using ubiquinone as an electron acceptor. Part of the enzyme membrane arm which is embedded in the lipid bilayer and involved in proton translocation. This chain is NADH-ubiquinone oxidoreductase chain 4L (MT-ND4L), found in Nyctomys sumichrasti (Sumichrast's vesper rat).